A 101-amino-acid chain; its full sequence is NADH-quinone oxidoreductase subunit K (101 aa).

Transmembrane regions (helical) follow at residues 4–24 (LSHYLVLGAILFAISVVGIFL), 30–50 (IVLLMAIELMLLAVNLNFIAF), and 61–81 (IFVFFILTVAAAESAIGLAIL).

Belongs to the complex I subunit 4L family. In terms of assembly, NDH-1 is composed of 14 different subunits. Subunits NuoA, H, J, K, L, M, N constitute the membrane sector of the complex.

Its subcellular location is the cell inner membrane. It catalyses the reaction a quinone + NADH + 5 H(+)(in) = a quinol + NAD(+) + 4 H(+)(out). In terms of biological role, NDH-1 shuttles electrons from NADH, via FMN and iron-sulfur (Fe-S) centers, to quinones in the respiratory chain. The immediate electron acceptor for the enzyme in this species is believed to be ubiquinone. Couples the redox reaction to proton translocation (for every two electrons transferred, four hydrogen ions are translocated across the cytoplasmic membrane), and thus conserves the redox energy in a proton gradient. In Aromatoleum aromaticum (strain DSM 19018 / LMG 30748 / EbN1) (Azoarcus sp. (strain EbN1)), this protein is NADH-quinone oxidoreductase subunit K.